Consider the following 258-residue polypeptide: MVLIRVLANLLILQLSYAQRSSELVIGGDECNINEHRFLVALYKSGRFRCGGTLINQEWVLTAAHCDRRNMEIKLGMHSKNVPNEDEQRRVPKEKFFCDSNKNYTQWNKDIMLIRLNSPVNNSTHIAPLSLPSNPPIVGSVCRIMGWGTITSPNETYPDVPHCANINLFNYTVCHGAHAGLPATSRTLCAGVLEGGKDTCKGDSGGPLICNGQFQGFVSWGGDPCAQPREPGVYTKVFDHLDWIQNIIAGNTTATCPL.

Positions Met-1 to Ala-18 are cleaved as a signal peptide. Residues Gln-19–Leu-24 constitute a propeptide that is removed on maturation. The region spanning Val-25–Ala-249 is the Peptidase S1 domain. 6 disulfides stabilise this stretch: Cys-31–Cys-163, Cys-50–Cys-66, Cys-98–Cys-256, Cys-142–Cys-210, Cys-174–Cys-189, and Cys-200–Cys-225. The active-site Charge relay system is the His-65. Asn-103 is a glycosylation site (N-linked (GlcNAc...) asparagine). Asp-110 (charge relay system) is an active-site residue. Asn-121, Asn-122, Asn-154, and Asn-170 each carry an N-linked (GlcNAc...) asparagine glycan. The Charge relay system role is filled by Ser-204. N-linked (GlcNAc...) asparagine glycosylation is present at Asn-251.

It belongs to the peptidase S1 family. Snake venom subfamily. In terms of assembly, monomer. As to expression, expressed by the venom gland.

The protein resides in the secreted. In terms of biological role, snake venom serine protease that may act in the hemostasis system of the prey. This is Snake venom serine protease KN12 from Trimeresurus stejnegeri (Chinese green tree viper).